The chain runs to 619 residues: Elongation factor 4 (619 aa).

A tr-type G domain is found at 17–198 (SVIRNFCIIA…RVVRAIPGPE (182 aa)). GTP-binding positions include 29–34 (DHGKST) and 145–148 (NKID).

This sequence belongs to the TRAFAC class translation factor GTPase superfamily. Classic translation factor GTPase family. LepA subfamily.

It localises to the cell membrane. It carries out the reaction GTP + H2O = GDP + phosphate + H(+). In terms of biological role, required for accurate and efficient protein synthesis under certain stress conditions. May act as a fidelity factor of the translation reaction, by catalyzing a one-codon backward translocation of tRNAs on improperly translocated ribosomes. Back-translocation proceeds from a post-translocation (POST) complex to a pre-translocation (PRE) complex, thus giving elongation factor G a second chance to translocate the tRNAs correctly. Binds to ribosomes in a GTP-dependent manner. The chain is Elongation factor 4 from Micrococcus luteus (strain ATCC 4698 / DSM 20030 / JCM 1464 / CCM 169 / CCUG 5858 / IAM 1056 / NBRC 3333 / NCIMB 9278 / NCTC 2665 / VKM Ac-2230) (Micrococcus lysodeikticus).